We begin with the raw amino-acid sequence, 426 residues long: Chromatin structure-remodeling complex subunit SFH1 (426 aa).

Phosphoserine is present on serine 78. An interaction with STH1 region spans residues 201–242 (AIMIPITLDIEHMGHTIKDQFLWNYNDDSISPEEFASIYCKD).

It belongs to the SNF5 family. As to quaternary structure, interacts directly with STH1. Component of the two forms of the RSC complex composed of at least either RSC1 or RSC2, and ARP7, ARP9, LDB7, NPL6, RSC3, RSC30, RSC4, RSC58, RSC6, RSC8, RSC9, SFH1, STH1, HTL1 and probably RTT102. The complexes interact with histone and histone variant components of centromeric chromatin. Phosphorylated in the G1 phase.

It localises to the nucleus. Its function is as follows. Component of the chromatin structure-remodeling complex (RSC), which is involved in transcription regulation and nucleosome positioning. RSC is responsible for the transfer of a histone octamer from a nucleosome core particle to naked DNA. The reaction requires ATP and involves an activated RSC-nucleosome intermediate. Remodeling reaction also involves DNA translocation, DNA twist and conformational change. As a reconfigurer of centromeric and flanking nucleosomes, RSC complex is required both for proper kinetochore function in chromosome segregation and, via a PKC1-dependent signaling pathway, for organization of the cellular cytoskeleton. This subunit is essential for mitotic growth and required for cell cycle progression. The protein is Chromatin structure-remodeling complex subunit SFH1 (SFH1) of Saccharomyces cerevisiae (strain ATCC 204508 / S288c) (Baker's yeast).